Here is a 326-residue protein sequence, read N- to C-terminus: Aspartate carbamoyltransferase catalytic subunit (326 aa).

Arg55 and Thr56 together coordinate carbamoyl phosphate. Lys83 serves as a coordination point for L-aspartate. Positions 105, 135, and 138 each coordinate carbamoyl phosphate. Residues Arg176 and Arg230 each contribute to the L-aspartate site. Gly271 and Pro272 together coordinate carbamoyl phosphate.

Belongs to the aspartate/ornithine carbamoyltransferase superfamily. ATCase family. Heterododecamer (2C3:3R2) of six catalytic PyrB chains organized as two trimers (C3), and six regulatory PyrI chains organized as three dimers (R2).

The catalysed reaction is carbamoyl phosphate + L-aspartate = N-carbamoyl-L-aspartate + phosphate + H(+). It functions in the pathway pyrimidine metabolism; UMP biosynthesis via de novo pathway; (S)-dihydroorotate from bicarbonate: step 2/3. Its function is as follows. Catalyzes the condensation of carbamoyl phosphate and aspartate to form carbamoyl aspartate and inorganic phosphate, the committed step in the de novo pyrimidine nucleotide biosynthesis pathway. The sequence is that of Aspartate carbamoyltransferase catalytic subunit from Streptomyces coelicolor (strain ATCC BAA-471 / A3(2) / M145).